We begin with the raw amino-acid sequence, 663 residues long: DNA ligase (663 aa).

NAD(+) contacts are provided by residues 31 to 35, 80 to 81, and Glu-109; these read DSEYD and SL. Residue Lys-111 is the N6-AMP-lysine intermediate of the active site. Residues Arg-132, Glu-166, Lys-282, and Lys-306 each contribute to the NAD(+) site. Residues Cys-400, Cys-403, Cys-418, and Cys-423 each coordinate Zn(2+). One can recognise a BRCT domain in the interval 585-663; that stretch reads ELHPVFGEKT…EQMMVDALRN (79 aa).

The protein belongs to the NAD-dependent DNA ligase family. LigA subfamily. The cofactor is Mg(2+). Mn(2+) serves as cofactor.

The catalysed reaction is NAD(+) + (deoxyribonucleotide)n-3'-hydroxyl + 5'-phospho-(deoxyribonucleotide)m = (deoxyribonucleotide)n+m + AMP + beta-nicotinamide D-nucleotide.. DNA ligase that catalyzes the formation of phosphodiester linkages between 5'-phosphoryl and 3'-hydroxyl groups in double-stranded DNA using NAD as a coenzyme and as the energy source for the reaction. It is essential for DNA replication and repair of damaged DNA. The chain is DNA ligase from Macrococcus caseolyticus (strain JCSC5402) (Macrococcoides caseolyticum).